Here is a 396-residue protein sequence, read N- to C-terminus: MKFVDEASIYVRAGKGGNGALSFWREKFVAKGGPDGGDGGNGGSVVLVADEALNTLIDFRFTKKYIAESGEGGQGRDMTGSKGADLEIKVPVGTTVIDEDTGETLGDLVRDGQKLKVAQGGHHGLGNTRFKSSTNRAPRQTTKGTVGEERTLKLEMKVLADVGLLGLPNAGKSTFIRAVSSAKPKVADYPFTTLVPNLGVVKVKKHQSFVIADIPGIIEGASEGAGLGIRFLKHLVRNRILLHIVDLAPWDEITPAEAAVIAVNELHQFSPALAERERWLVLNKTDMVPEDELEERCQSVIDALGWEGKAYRISAISGEGTEVLCLDLMTALDEKRELLLESPEAREKEKAVRALIDEEGRNRIMSLREKRRKAGLLLDDDDFDEDDYDVEVEYVS.

The Obg domain maps to 1-159 (MKFVDEASIY…RTLKLEMKVL (159 aa)). The interval 120 to 146 (GGHHGLGNTRFKSSTNRAPRQTTKGTV) is disordered. Residues 129-144 (RFKSSTNRAPRQTTKG) show a composition bias toward polar residues. Positions 160–333 (ADVGLLGLPN…LCLDLMTALD (174 aa)) constitute an OBG-type G domain. Residues 166 to 173 (GLPNAGKS), 191 to 195 (FTTLV), 213 to 216 (DIPG), 283 to 286 (NKTD), and 314 to 316 (SAI) each bind GTP. 2 residues coordinate Mg(2+): Ser173 and Thr193.

The protein belongs to the TRAFAC class OBG-HflX-like GTPase superfamily. OBG GTPase family. Monomer. Mg(2+) is required as a cofactor.

Its subcellular location is the cytoplasm. An essential GTPase which binds GTP, GDP and possibly (p)ppGpp with moderate affinity, with high nucleotide exchange rates and a fairly low GTP hydrolysis rate. Plays a role in control of the cell cycle, stress response, ribosome biogenesis and in those bacteria that undergo differentiation, in morphogenesis control. This Marinomonas sp. (strain MWYL1) protein is GTPase Obg.